Here is a 79-residue protein sequence, read N- to C-terminus: DCAKEGEVCSWGKKCCDLDNFYCPMEFIPHCKKYKPYVPVTTNCAKEGEVCGWGSKCCHGLDCPLAFIPYCEKYRGRND.

Cystine bridges form between Cys-2–Cys-16, Cys-9–Cys-23, Cys-15–Cys-31, Cys-44–Cys-58, Cys-51–Cys-63, and Cys-57–Cys-71. 2 Domain repeats span residues 2-31 and 42-71; these read CAKEGEVCSWGKKCCDLDNFYCPMEFIPHC and TNCAKEGEVCGWGSKCCHGLDCPLAFIPYC. Residues 2-71 are 2 X approximate repeats with cysteine pattern C-C-CC-C-C; the sequence is CAKEGEVCSW…DCPLAFIPYC (70 aa).

Belongs to the neurotoxin 23 family. Double-knot toxin subfamily. In terms of assembly, interacts with TRPV1 (2 toxins (4 moieties) bind 1 channel (homotetramer)). As to expression, expressed by the venom gland.

It localises to the secreted. Its function is as follows. Selectively activates the heat-activated TRPV1 channel. It binds to TRPV1 in an open state-dependent manner, trapping it there to produce irreversible currents. It binds to the outer edge of the external pore of TRPV1 in a counterclockwise configuration, using a limited protein-protein interface and inserting hydrophobic residues into the bilayer. It also partitions naturally into membranes, with the two lobes exhibiting opposing energetics for membrane partitioning (K1) and channel activation (K2). In addition, the toxin disrupts a cluster of hydrophobic residues behind the selectivity filter that are critical for channel activation. The polypeptide is Tau-theraphotoxin-Hs1a (Cyriopagopus schmidti (Chinese bird spider)).